A 333-amino-acid chain; its full sequence is MKTIAIDAMGGENAPKAIVDAVLKAKPKLKDTKFVLFGDEEKINELIPAEQKDRIDVIATSEVIIDSDEPVKAIRRKKNSSMVVAANYVKSGKADALFSLGNTGALLACGIFIIGRIKGVERPALMPTLPSAKSEDGFNIIDVGANAQSKPEYLVQWAQMANFYAQKIRNIKNPTVALLNNGAEDDKGDALHQEAYKLLKATDLNFIGNAEGNDLMEGKADVIVTDGFTGNATLKAIEGTASVILRLLKDSLLNNGLRPKVGALLAKPGLTALKKRFDTARYGGAVLLGVNAPVVKTHGRSNIRPIYYTLLQIDKMLSQDLVGEYKKYFSESR.

This sequence belongs to the PlsX family. Homodimer. Probably interacts with PlsY.

Its subcellular location is the cytoplasm. The enzyme catalyses a fatty acyl-[ACP] + phosphate = an acyl phosphate + holo-[ACP]. It participates in lipid metabolism; phospholipid metabolism. In terms of biological role, catalyzes the reversible formation of acyl-phosphate (acyl-PO(4)) from acyl-[acyl-carrier-protein] (acyl-ACP). This enzyme utilizes acyl-ACP as fatty acyl donor, but not acyl-CoA. The sequence is that of Phosphate acyltransferase from Lactobacillus johnsonii (strain CNCM I-12250 / La1 / NCC 533).